Consider the following 698-residue polypeptide: Polyribonucleotide nucleotidyltransferase (698 aa).

Residues aspartate 490 and aspartate 496 each coordinate Mg(2+). The KH domain occupies 557 to 616 (PKVVTMTIKPDKIRDVIGPGGKKINEIIDETGVKLDIEQDGTIFIGAVDQAMINRAREII). The S1 motif domain maps to 626 to 694 (GQTYQATVKR…KQGRVNASHR (69 aa)).

The protein belongs to the polyribonucleotide nucleotidyltransferase family. Mg(2+) is required as a cofactor.

It localises to the cytoplasm. The catalysed reaction is RNA(n+1) + phosphate = RNA(n) + a ribonucleoside 5'-diphosphate. Functionally, involved in mRNA degradation. Catalyzes the phosphorolysis of single-stranded polyribonucleotides processively in the 3'- to 5'-direction. This is Polyribonucleotide nucleotidyltransferase from Staphylococcus aureus (strain bovine RF122 / ET3-1).